The sequence spans 1104 residues: Mitogen-activated protein kinase kinase kinase 9 (1104 aa).

Low complexity predominate over residues 12-22 (ASAAAAAPPGE). Residues 12-47 (ASAAAAAPPGEDGAGAGAEEEEEEEEEAAAAVGPGE) form a disordered region. Acidic residues predominate over residues 29-39 (AEEEEEEEEEA). Residues 52-116 (APLPYWTAVF…PSNYVTPRSA (65 aa)) form the SH3 domain. Residues 144–412 (LTLEEIIGIG…LTTIEESGFF (269 aa)) form the Protein kinase domain. ATP is bound by residues 150 to 158 (IGIGGFGKV) and Lys171. The active-site Proton acceptor is the Asp268. Thr304 and Thr305 each carry phosphothreonine; by autocatalysis. Residue Ser308 is modified to Phosphoserine; by autocatalysis. Position 312 is a phosphothreonine; by autocatalysis (Thr312). Leucine-zipper regions lie at residues 430–451 (IQEM…EEEL) and 465–486 (LRRR…ELNI). Disordered stretches follow at residues 532–636 (ASPT…PHFH), 675–742 (MEDE…LKRG), 781–819 (EEPE…FKKE), and 890–1038 (RDPN…CFAS). Ser533 bears the Phosphoserine mark. 2 stretches are compositionally biased toward polar residues: residues 566–575 (PGESSKTWGR) and 723–739 (PVNS…TNSL). A compositionally biased stretch (basic and acidic residues) spans 785 to 797 (PPAREEKKRREGL). Residues 893-910 (NQSLTPTHVTLTTPSQPS) are compositionally biased toward polar residues. A compositionally biased stretch (low complexity) spans 929–944 (SRSPSSNGLSPSPGAG). Residues 1014–1038 (HARSTSPANSSSTETPSNLDSCFAS) show a composition bias toward polar residues.

Belongs to the protein kinase superfamily. STE Ser/Thr protein kinase family. MAP kinase kinase kinase subfamily. As to quaternary structure, homodimer. Mg(2+) is required as a cofactor. In terms of processing, autophosphorylation on serine and threonine residues within the activation loop plays a role in enzyme activation. Thr-312 is likely to be the main autophosphorylation site. Autophosphorylation also occurs on Thr-304 and Ser-308. In terms of tissue distribution, expressed in epithelial tumor cell lines of colonic, breast and esophageal origin.

The enzyme catalyses L-seryl-[protein] + ATP = O-phospho-L-seryl-[protein] + ADP + H(+). The catalysed reaction is L-threonyl-[protein] + ATP = O-phospho-L-threonyl-[protein] + ADP + H(+). Homodimerization via the leucine zipper domains is required for autophosphorylation of multiple sites in the activation loop and subsequent activation. Autophosphorylation at Thr-312 is the key step in activation of MAP3K9/MLK1 and is required for full phosphorylation. Autophosphorylation at Thr-304 and Ser-308 have been shown to be of secondary importance in the activation of MAP3K9/MLK1. CEP-1347 and many indolocarbazole analogs have been shown to act as inhibitors of MAP3K9/MLK1 activity. In terms of biological role, serine/threonine kinase which acts as an essential component of the MAP kinase signal transduction pathway. Plays an important role in the cascades of cellular responses evoked by changes in the environment. Once activated, acts as an upstream activator of the MKK/JNK signal transduction cascade through the phosphorylation of MAP2K4/MKK4 and MAP2K7/MKK7 which in turn activate the JNKs. The MKK/JNK signaling pathway regulates stress response via activator protein-1 (JUN) and GATA4 transcription factors. Also plays a role in mitochondrial death signaling pathway, including the release cytochrome c, leading to apoptosis. This chain is Mitogen-activated protein kinase kinase kinase 9 (MAP3K9), found in Homo sapiens (Human).